The sequence spans 186 residues: Ribosome-recycling factor (186 aa).

The protein belongs to the RRF family.

It is found in the cytoplasm. Functionally, responsible for the release of ribosomes from messenger RNA at the termination of protein biosynthesis. May increase the efficiency of translation by recycling ribosomes from one round of translation to another. The sequence is that of Ribosome-recycling factor from Methylibium petroleiphilum (strain ATCC BAA-1232 / LMG 22953 / PM1).